The chain runs to 354 residues: Carbamoyl phosphate synthase arginine-specific small chain (354 aa).

A CPSase region spans residues 1–163 (MKAYLHVASG…RTIETYGEGG (163 aa)). Residues serine 46, glycine 213, and glycine 215 each coordinate L-glutamine. Residues 165-352 (HLVLVDFGYK…LQTVFKGENV (188 aa)) form the Glutamine amidotransferase type-1 domain. The active-site Nucleophile is cysteine 240. Residues leucine 241, glutamine 244, asparagine 282, and tyrosine 285 each coordinate L-glutamine. Active-site residues include histidine 325 and glutamate 327.

This sequence belongs to the CarA family. In terms of assembly, composed of two chains; the small (or glutamine) chain promotes the hydrolysis of glutamine to ammonia, which is used by the large (or ammonia) chain to synthesize carbamoyl phosphate. Tetramer of heterodimers (alpha,beta)4.

It catalyses the reaction hydrogencarbonate + L-glutamine + 2 ATP + H2O = carbamoyl phosphate + L-glutamate + 2 ADP + phosphate + 2 H(+). The catalysed reaction is L-glutamine + H2O = L-glutamate + NH4(+). Its pathway is amino-acid biosynthesis; L-arginine biosynthesis; carbamoyl phosphate from bicarbonate: step 1/1. In terms of biological role, small subunit of the glutamine-dependent carbamoyl phosphate synthetase (CPSase). CPSase catalyzes the formation of carbamoyl phosphate from the ammonia moiety of glutamine, carbonate, and phosphate donated by ATP, constituting the first step of the biosynthetic pathway leading to arginine and/or urea. The small subunit (glutamine amidotransferase) binds and cleaves glutamine to supply the large subunit with the substrate ammonia. This chain is Carbamoyl phosphate synthase arginine-specific small chain, found in Geobacillus stearothermophilus (Bacillus stearothermophilus).